The sequence spans 315 residues: Glutaminase (315 aa).

Substrate is bound by residues Ser70, Asn120, Glu166, Asn173, Tyr197, Tyr249, and Val267.

This sequence belongs to the glutaminase family. In terms of assembly, homotetramer.

The enzyme catalyses L-glutamine + H2O = L-glutamate + NH4(+). In Rhizobium meliloti (strain 1021) (Ensifer meliloti), this protein is Glutaminase.